Here is a 416-residue protein sequence, read N- to C-terminus: Multifunctional CCA protein (416 aa).

Residues glycine 8 and arginine 11 each contribute to the ATP site. CTP-binding residues include glycine 8 and arginine 11. Mg(2+) is bound by residues aspartate 21 and aspartate 23. Positions 91, 137, and 140 each coordinate ATP. Residues arginine 91, arginine 137, and arginine 140 each contribute to the CTP site. The HD domain maps to 228 to 329 (TGVHTLMVLA…VKIFDKADFW (102 aa)).

It belongs to the tRNA nucleotidyltransferase/poly(A) polymerase family. Bacterial CCA-adding enzyme type 1 subfamily. In terms of assembly, monomer. Can also form homodimers and oligomers. Mg(2+) serves as cofactor. The cofactor is Ni(2+).

It carries out the reaction a tRNA precursor + 2 CTP + ATP = a tRNA with a 3' CCA end + 3 diphosphate. The catalysed reaction is a tRNA with a 3' CCA end + 2 CTP + ATP = a tRNA with a 3' CCACCA end + 3 diphosphate. Catalyzes the addition and repair of the essential 3'-terminal CCA sequence in tRNAs without using a nucleic acid template. Adds these three nucleotides in the order of C, C, and A to the tRNA nucleotide-73, using CTP and ATP as substrates and producing inorganic pyrophosphate. tRNA 3'-terminal CCA addition is required both for tRNA processing and repair. Also involved in tRNA surveillance by mediating tandem CCA addition to generate a CCACCA at the 3' terminus of unstable tRNAs. While stable tRNAs receive only 3'-terminal CCA, unstable tRNAs are marked with CCACCA and rapidly degraded. The chain is Multifunctional CCA protein from Shewanella baltica (strain OS195).